The chain runs to 506 residues: RNA-splicing ligase RtcB homolog (506 aa).

Mn(2+) contacts are provided by Asp-120, Cys-123, His-228, His-260, and His-354. Residue Asn-227–Glu-231 coordinates GMP. Residues His-354 to Asn-355, Gly-403 to Met-406, Ser-410, His-429 to Gly-432, and Lys-505 contribute to the GMP site. Residue His-429 is the GMP-histidine intermediate of the active site.

It belongs to the RtcB family. Catalytic component of the tRNA-splicing ligase complex. Requires Mn(2+) as cofactor.

It catalyses the reaction a 3'-end 3'-phospho-ribonucleotide-RNA + a 5'-end dephospho-ribonucleoside-RNA + GTP = a ribonucleotidyl-ribonucleotide-RNA + GMP + diphosphate. It carries out the reaction a 3'-end 2',3'-cyclophospho-ribonucleotide-RNA + a 5'-end dephospho-ribonucleoside-RNA + GTP + H2O = a ribonucleotidyl-ribonucleotide-RNA + GMP + diphosphate + H(+). Functionally, catalytic subunit of the tRNA-splicing ligase complex that acts by directly joining spliced tRNA halves to mature-sized tRNAs by incorporating the precursor-derived splice junction phosphate into the mature tRNA as a canonical 3',5'-phosphodiester. May act as an RNA ligase with broad substrate specificity, and may function toward other RNAs. This chain is RNA-splicing ligase RtcB homolog, found in Plasmodium falciparum (isolate 3D7).